We begin with the raw amino-acid sequence, 230 residues long: Heptaprenylglyceryl phosphate synthase (230 aa).

K12 is a binding site for sn-glycerol 1-phosphate. Residues D14 and T40 each contribute to the Mg(2+) site. Sn-glycerol 1-phosphate-binding positions include 159 to 164 (YIEYSG), G189, and 209 to 210 (GD).

This sequence belongs to the GGGP/HepGP synthase family. Group I subfamily. Homodimer. Requires Mg(2+) as cofactor.

It carries out the reaction sn-glycerol 1-phosphate + all-trans-heptaprenyl diphosphate = 3-heptaprenyl-sn-glycero-1-phosphate + diphosphate. Its pathway is membrane lipid metabolism; glycerophospholipid metabolism. Prenyltransferase that catalyzes in vivo the transfer of the heptaprenyl moiety of heptaprenyl pyrophosphate (HepPP; 35 carbon atoms) to the C3 hydroxyl of sn-glycerol-1-phosphate (G1P), producing heptaprenylglyceryl phosphate (HepGP). This reaction is an ether-bond-formation step in the biosynthesis of archaea-type G1P-based membrane lipids found in Bacillales. The chain is Heptaprenylglyceryl phosphate synthase from Staphylococcus aureus (strain MRSA252).